The following is a 67-amino-acid chain: Small ribosomal subunit protein eS17 (67 aa).

Belongs to the eukaryotic ribosomal protein eS17 family.

The polypeptide is Small ribosomal subunit protein eS17 (Thermococcus gammatolerans (strain DSM 15229 / JCM 11827 / EJ3)).